A 59-amino-acid polypeptide reads, in one-letter code: Putative potassium channel toxin Ts25 (59 aa).

A signal peptide spans 1 to 22; the sequence is MKAFYGILIIFILISMIHLSQQ. 3 cysteine pairs are disulfide-bonded: cysteine 29/cysteine 50, cysteine 35/cysteine 55, and cysteine 39/cysteine 57.

Belongs to the short scorpion toxin superfamily. Potassium channel inhibitor family. Alpha-KTx 04 subfamily. Expressed by the venom gland.

The protein resides in the secreted. Functionally, potently blocks Kv1.1/KCNA1 (85%), Kv1.2/KCNA2 (91%), Kv1.3/KCNA3 (89%), Kv1.6/KCNA6 (94%), and Shaker (97%). The protein is Putative potassium channel toxin Ts25 of Tityus serrulatus (Brazilian scorpion).